The following is a 112-amino-acid chain: SPbeta prophage-derived uncharacterized protein YoqB (112 aa).

This is SPbeta prophage-derived uncharacterized protein YoqB (yoqB) from Bacillus subtilis (strain 168).